Reading from the N-terminus, the 1105-residue chain is DNA polymerase delta catalytic subunit (1105 aa).

The segment at 1–46 is disordered; sequence MSSGGRGGKRRGAPPPGPSGAAAKRAHPGGTPQPPPPAATAAAPVA. Zn(2+)-binding residues include C1015, C1018, C1030, and C1033. Residues 1015–1033 form a CysA-type zinc finger; sequence CLGCKAVISGSNQTLCFHC. [4Fe-4S] cluster contacts are provided by C1062, C1065, C1075, and C1080. Residues 1062–1080 carry the CysB motif motif; it reads CQECQGSLHQDVLCTSRDC.

Belongs to the DNA polymerase type-B family. In terms of assembly, heterodimer with subunits of 125 kDa and 50 kDa. The 125 kDa subunit contains the polymerase active site and most likely the active site for the 3'-5' exonuclease activity. Requires [4Fe-4S] cluster as cofactor.

The protein resides in the nucleus. It carries out the reaction DNA(n) + a 2'-deoxyribonucleoside 5'-triphosphate = DNA(n+1) + diphosphate. Functionally, this polymerase possesses two enzymatic activities: DNA synthesis (polymerase) and an exonucleolytic activity that degrades single-stranded DNA in the 3'- to 5'-direction. In Oryza sativa subsp. japonica (Rice), this protein is DNA polymerase delta catalytic subunit (POLD1).